The primary structure comprises 284 residues: Distal membrane arm assembly component 2 (284 aa).

Belongs to the ATP synthase subunit s family. In terms of assembly, associates with mitochondrial complex I assembly intermediates during its biogenesis.

Involved in the assembly of the mitochondrial membrane respiratory chain NADH dehydrogenase (Complex I). This is Distal membrane arm assembly component 2 from Drosophila melanogaster (Fruit fly).